Consider the following 488-residue polypeptide: Auxin transporter-like protein 1 (488 aa).

A disordered region spans residues 1–36; that stretch reads MSGEKQAEESIVVSGEDEVAGRKVEDSAAEEDIDGN. The Cytoplasmic portion of the chain corresponds to 1 to 64; the sequence is MSGEKQAEES…DAWFSCASNQ (64 aa). A helical membrane pass occupies residues 65 to 82; the sequence is VAQVLLTLPYSFSQLGML. The Extracellular portion of the chain corresponds to 83 to 84; that stretch reads SG. The chain crosses the membrane as a helical span at residues 85-105; it reads ILLQIFYGLMGSWTAYLISVL. The Cytoplasmic segment spans residues 106-141; that stretch reads YVEYRARMEKQEAKSFKNHVIQWFEVLDGLLGPYWK. The chain crosses the membrane as a helical span at residues 142-162; the sequence is AAGLAFNCTFLLFGSVIQLIA. Residues 163-178 are Extracellular-facing; sequence CASNIYYINDRLDKRT. A helical membrane pass occupies residues 179-199; it reads WTYIFGACCATTVFIPSFHNY. At 200–202 the chain is on the cytoplasmic side; it reads RIW. A helical membrane pass occupies residues 203–223; that stretch reads SFLGLGMTTYTAWYLTIASFL. Residues 224–238 are Extracellular-facing; that stretch reads HGQAEGVTHSGPTKL. The helical transmembrane segment at 239–259 threads the bilayer; sequence VLYFTGATNILYTFGGHAVTV. Residues 260–273 lie on the Cytoplasmic side of the membrane; the sequence is EIMHAMWKPRKFKS. Residues 274 to 294 traverse the membrane as a helical segment; that stretch reads IYLMATLYVFTLTLPSASAVY. The Extracellular segment spans residues 295–320; the sequence is WAFGDQLLNHSNAFSLLPKTRFRDTA. Residue Asn-303 is glycosylated (N-linked (GlcNAc...) asparagine). A helical transmembrane segment spans residues 321–341; it reads VILMLIHQFITFGFACTPLYF. The Cytoplasmic segment spans residues 342 to 362; it reads VWEKAIGMHHTKSLCLRALVR. Residues 363 to 383 form a helical membrane-spanning segment; sequence LPVVVPIWFLAIIFPFFGPIN. Residue Ser-384 is a topological domain, extracellular. A helical transmembrane segment spans residues 385–405; that stretch reads AVGALLVTFTVYIIPALAHML. The Cytoplasmic portion of the chain corresponds to 406 to 427; that stretch reads TYRTASARRNAAEKPPFFIPSW. Residues 428–448 form a helical membrane-spanning segment; the sequence is AGVYVINAFIVVWVLVLGFGF. The Extracellular segment spans residues 449–488; it reads GGWASMTNFIRQIDTFGLFAKCYQCKPPPAPIAAGAHHRR.

Belongs to the amino acid/polyamine transporter 2 family. Amino acid/auxin permease (AAAP) (TC 2.A.18.1) subfamily.

The protein localises to the cell membrane. Its function is as follows. Carrier protein involved in proton-driven auxin influx. Mediates the formation of auxin gradient from developing leaves (site of auxin biosynthesis) to tips by contributing to the loading of auxin in vascular tissues and facilitating acropetal (base to tip) auxin transport within inner tissues of the root apex, and basipetal (tip to base) auxin transport within outer tissues of the root apex. This Arabidopsis thaliana (Mouse-ear cress) protein is Auxin transporter-like protein 1 (LAX1).